Consider the following 900-residue polypeptide: Alanine--tRNA ligase (900 aa).

The Zn(2+) site is built by H580, H584, C683, and H687.

Belongs to the class-II aminoacyl-tRNA synthetase family. The cofactor is Zn(2+).

It localises to the cytoplasm. The enzyme catalyses tRNA(Ala) + L-alanine + ATP = L-alanyl-tRNA(Ala) + AMP + diphosphate. Catalyzes the attachment of alanine to tRNA(Ala) in a two-step reaction: alanine is first activated by ATP to form Ala-AMP and then transferred to the acceptor end of tRNA(Ala). Also edits incorrectly charged Ser-tRNA(Ala) and Gly-tRNA(Ala) via its editing domain. The chain is Alanine--tRNA ligase from Mycolicibacterium paratuberculosis (strain ATCC BAA-968 / K-10) (Mycobacterium paratuberculosis).